Here is a 410-residue protein sequence, read N- to C-terminus: Arginine deiminase (410 aa).

Cys400 functions as the Amidino-cysteine intermediate in the catalytic mechanism.

This sequence belongs to the arginine deiminase family.

The protein resides in the cytoplasm. It catalyses the reaction L-arginine + H2O = L-citrulline + NH4(+). It participates in amino-acid degradation; L-arginine degradation via ADI pathway; carbamoyl phosphate from L-arginine: step 1/2. In Streptococcus uberis (strain ATCC BAA-854 / 0140J), this protein is Arginine deiminase.